A 145-amino-acid polypeptide reads, in one-letter code: D-aminoacyl-tRNA deacylase (145 aa).

The short motif at 137–138 is the Gly-cisPro motif, important for rejection of L-amino acids element; that stretch reads GP.

The protein belongs to the DTD family. As to quaternary structure, homodimer.

It localises to the cytoplasm. It carries out the reaction glycyl-tRNA(Ala) + H2O = tRNA(Ala) + glycine + H(+). The catalysed reaction is a D-aminoacyl-tRNA + H2O = a tRNA + a D-alpha-amino acid + H(+). Functionally, an aminoacyl-tRNA editing enzyme that deacylates mischarged D-aminoacyl-tRNAs. Also deacylates mischarged glycyl-tRNA(Ala), protecting cells against glycine mischarging by AlaRS. Acts via tRNA-based rather than protein-based catalysis; rejects L-amino acids rather than detecting D-amino acids in the active site. By recycling D-aminoacyl-tRNA to D-amino acids and free tRNA molecules, this enzyme counteracts the toxicity associated with the formation of D-aminoacyl-tRNA entities in vivo and helps enforce protein L-homochirality. This chain is D-aminoacyl-tRNA deacylase, found in Shewanella baltica (strain OS223).